A 115-amino-acid chain; its full sequence is U3-lycotoxin-Ls1o (115 aa).

The first 20 residues, 1–20, serve as a signal peptide directing secretion; that stretch reads MKFVLLFGVLLVTLFSYSSA. Residues 21 to 44 constitute a propeptide that is removed on maturation; that stretch reads EMLDDFDQADEDELLSLIEKEEAR. Cystine bridges form between Cys48/Cys63, Cys55/Cys72, Cys62/Cys87, and Cys74/Cys85.

Belongs to the neurotoxin 19 (CSTX) family. 01 subfamily. Expressed by the venom gland.

The protein localises to the secreted. This Lycosa singoriensis (Wolf spider) protein is U3-lycotoxin-Ls1o.